Consider the following 258-residue polypeptide: Ureidoacrylate amidohydrolase RutB (258 aa).

The disordered stretch occupies residues M1–G23. D47 serves as the catalytic Proton acceptor. The active site involves K156. The Nucleophile role is filled by C189.

The protein belongs to the isochorismatase family. RutB subfamily.

It carries out the reaction (Z)-3-ureidoacrylate + H2O + H(+) = (Z)-3-aminoacrylate + NH4(+) + CO2. The enzyme catalyses (Z)-3-ureidoacrylate + H2O = (Z)-3-aminoacrylate + carbamate + H(+). It catalyses the reaction (Z)-2-methylureidoacrylate + H2O + H(+) = (Z)-2-methylaminoacrylate + NH4(+) + CO2. Functionally, hydrolyzes ureidoacrylate to form aminoacrylate and carbamate. The carbamate hydrolyzes spontaneously, thereby releasing one of the nitrogen atoms of the pyrimidine ring as ammonia and one of its carbon atoms as CO2. In Methylobacterium radiotolerans (strain ATCC 27329 / DSM 1819 / JCM 2831 / NBRC 15690 / NCIMB 10815 / 0-1), this protein is Ureidoacrylate amidohydrolase RutB.